Here is a 416-residue protein sequence, read N- to C-terminus: 3-hydroxy-3-methylglutaryl coenzyme A reductase AN1593 (416 aa).

E103 functions as the Charge relay system in the catalytic mechanism. A glycan (N-linked (GlcNAc...) asparagine) is linked at N167. The active-site Charge relay system is the K236. The N-linked (GlcNAc...) asparagine glycan is linked to N277. The Charge relay system role is filled by D312. A helical transmembrane segment spans residues 380–400; it reads LALLVAAGVLAGELSLCSALS. H408 serves as the catalytic Proton donor.

It belongs to the HMG-CoA reductase family.

It localises to the membrane. The enzyme catalyses (R)-mevalonate + 2 NADP(+) + CoA = (3S)-3-hydroxy-3-methylglutaryl-CoA + 2 NADPH + 2 H(+). It functions in the pathway metabolic intermediate biosynthesis; (R)-mevalonate biosynthesis; (R)-mevalonate from acetyl-CoA: step 3/3. Its function is as follows. 3-hydroxy-3-methylglutaryl coenzyme A reductase; part of the gene cluster that mediates the biosynthesis of the diterpene ent-pimara-8(14),15-diene (PD). Within the cluster, the HMG-CoA reductase AN1593 functions in the mevalonate pathway, which produces isoprenoid precursors. The geranylgeranyl pyrophosphate (GGPP) synthase AN1592 is needed in the formation of GGPP, the precursor for diterpenes. Lastly, the pimaradiene synthase pbcA performs the 2 cyclization steps that convert GGPP to ent-pimara-8(14),15-diene. The putative roles of the remaining cluster enzymes in ent-pimara-8(14),15-diene biosynthesis is unclear. The cytochrome P450 monooxygenase AN1598, the glutathione S-transferase AN1595, the oxidoreductases AN1596 and AN1597 probably function as decorative enzymes. It is possible that in biological conditions the compound is oxidized to ent-pimara-8(14),15-dien-19-oic acid, which is a bioactive diterpene compound predominant in many plant extracts. This chain is 3-hydroxy-3-methylglutaryl coenzyme A reductase AN1593, found in Emericella nidulans (strain FGSC A4 / ATCC 38163 / CBS 112.46 / NRRL 194 / M139) (Aspergillus nidulans).